Consider the following 101-residue polypeptide: Large ribosomal subunit protein uL23 (101 aa).

This sequence belongs to the universal ribosomal protein uL23 family. In terms of assembly, part of the 50S ribosomal subunit. Contacts protein L29, and trigger factor when it is bound to the ribosome.

One of the early assembly proteins it binds 23S rRNA. One of the proteins that surrounds the polypeptide exit tunnel on the outside of the ribosome. Forms the main docking site for trigger factor binding to the ribosome. The protein is Large ribosomal subunit protein uL23 of Wigglesworthia glossinidia brevipalpis.